The following is a 185-amino-acid chain: Putative manganese efflux pump MntP (185 aa).

Helical transmembrane passes span 4–24 (LLLS…SVSL), 43–63 (IFFG…GVPI), 67–87 (IDPF…GKMI), 107–127 (LLLA…FALI), 131–151 (VLLP…FGVL), and 165–185 (QILG…EYCL).

The protein belongs to the MntP (TC 9.B.29) family.

The protein resides in the cell membrane. Probably functions as a manganese efflux pump. The chain is Putative manganese efflux pump MntP from Methanocorpusculum labreanum (strain ATCC 43576 / DSM 4855 / Z).